The chain runs to 633 residues: MA3 DOMAIN-CONTAINING TRANSLATION REGULATORY FACTOR 4 (633 aa).

MI domains are found at residues 56–177 (DYKR…RAKK), 220–341 (ETKR…ERSD), 351–472 (RFKK…EISN), and 514–633 (DAKD…STDS). Positions 94–101 (VKRLVSMA) match the Nuclear localization signal 1 motif. Residues 389 to 396 (LKKLITLA) carry the Nuclear localization signal 2 motif.

Belongs to the PDCD4 family. As to quaternary structure, binds to EIF4A1. The association with ribosomes is modulated by cellular energy status and TOR activity. Mostly expressed, at low levels, in rosette leaves and flower buds, and, to a lower extent, in roots, stems, cauline leaves and flowers.

The protein resides in the nucleus. Its subcellular location is the cytoplasm. It is found in the cytosol. Involved in target of rapamycin (TOR)-regulated translation control, especially under energy-deficient conditions. The chain is MA3 DOMAIN-CONTAINING TRANSLATION REGULATORY FACTOR 4 from Arabidopsis thaliana (Mouse-ear cress).